The following is a 308-amino-acid chain: Elongation factor Ts (308 aa).

Residues 80-83 (TDFV) are involved in Mg(2+) ion dislocation from EF-Tu.

Belongs to the EF-Ts family.

The protein localises to the cytoplasm. Associates with the EF-Tu.GDP complex and induces the exchange of GDP to GTP. It remains bound to the aminoacyl-tRNA.EF-Tu.GTP complex up to the GTP hydrolysis stage on the ribosome. In Verminephrobacter eiseniae (strain EF01-2), this protein is Elongation factor Ts.